Here is a 167-residue protein sequence, read N- to C-terminus: Ureidoglycolate lyase (167 aa).

This sequence belongs to the ureidoglycolate lyase family. Homodimer. Ni(2+) serves as cofactor.

The catalysed reaction is (S)-ureidoglycolate = urea + glyoxylate. The protein operates within nitrogen metabolism; (S)-allantoin degradation. Its function is as follows. Catalyzes the catabolism of the allantoin degradation intermediate (S)-ureidoglycolate, generating urea and glyoxylate. Involved in the utilization of allantoin as nitrogen source. The chain is Ureidoglycolate lyase from Pseudomonas fluorescens (strain Pf0-1).